Consider the following 445-residue polypeptide: Glutamyl-tRNA(Gln) amidotransferase subunit D (445 aa).

Residues 93–425 (SEIKIISTGG…EKIRSLMISN (333 aa)) enclose the Asparaginase/glutaminase domain. Residues Thr-103, Thr-179, Asp-180, and Lys-258 contribute to the active site.

It belongs to the asparaginase 1 family. GatD subfamily. In terms of assembly, heterodimer of GatD and GatE.

It carries out the reaction L-glutamyl-tRNA(Gln) + L-glutamine + ATP + H2O = L-glutaminyl-tRNA(Gln) + L-glutamate + ADP + phosphate + H(+). In terms of biological role, allows the formation of correctly charged Gln-tRNA(Gln) through the transamidation of misacylated Glu-tRNA(Gln) in organisms which lack glutaminyl-tRNA synthetase. The reaction takes place in the presence of glutamine and ATP through an activated gamma-phospho-Glu-tRNA(Gln). The GatDE system is specific for glutamate and does not act on aspartate. The polypeptide is Glutamyl-tRNA(Gln) amidotransferase subunit D (Saccharolobus islandicus (strain M.16.27) (Sulfolobus islandicus)).